The sequence spans 922 residues: Isoleucine--tRNA ligase (922 aa).

A 'HIGH' region motif is present at residues 58 to 68 (PYANGDIHIGH). Glu552 provides a ligand contact to L-isoleucyl-5'-AMP. A 'KMSKS' region motif is present at residues 593–597 (KMSKS). Lys596 serves as a coordination point for ATP. Residues Cys885, Cys888, Cys905, and Cys908 each contribute to the Zn(2+) site.

This sequence belongs to the class-I aminoacyl-tRNA synthetase family. IleS type 1 subfamily. As to quaternary structure, monomer. The cofactor is Zn(2+).

The protein localises to the cytoplasm. It carries out the reaction tRNA(Ile) + L-isoleucine + ATP = L-isoleucyl-tRNA(Ile) + AMP + diphosphate. Functionally, catalyzes the attachment of isoleucine to tRNA(Ile). As IleRS can inadvertently accommodate and process structurally similar amino acids such as valine, to avoid such errors it has two additional distinct tRNA(Ile)-dependent editing activities. One activity is designated as 'pretransfer' editing and involves the hydrolysis of activated Val-AMP. The other activity is designated 'posttransfer' editing and involves deacylation of mischarged Val-tRNA(Ile). The chain is Isoleucine--tRNA ligase from Ruthia magnifica subsp. Calyptogena magnifica.